Consider the following 46-residue polypeptide: Toxin PhcrTx2 (46 aa).

3 disulfide bridges follow: Cys-4–Cys-40, Cys-6–Cys-32, and Cys-22–Cys-41.

This sequence belongs to the sea anemone type 3 (BDS) potassium channel toxin family.

The protein localises to the secreted. The protein resides in the nematocyst. Its function is as follows. Neurotoxin that induces paralysis (but not death) to U.thayeri crabs. Partially and reversibly inhibits glutamate-evoked peak currents (IC(50)=4.7 uM) but not voltage-gated potassium channel currents in cultured isolated neurons from the land snail H.aspersa. Weakly inhibits voltage-gated potassium peak currents (IC(50)=6.4 uM) and steady-state currents (IC(50)=8.2 uM) in rat dorsal root ganglion (DRG) neurons. Weakly inhibits voltage-gated sodium currents in rat DRG neurons (IC(50)=0.9 uM). The polypeptide is Toxin PhcrTx2 (Phymanthus crucifer (Red beaded anemone)).